A 176-amino-acid chain; its full sequence is Cystatin-related protein 2 (176 aa).

An N-terminal signal peptide occupies residues 1–26 (MYKTLCGTQLLLAIFVLFLNFSHATA). Positions 27 to 30 (KGTR) are excised as a propeptide. N-linked (GlcNAc...) asparagine glycosylation is present at asparagine 71. 2 disulfide bridges follow: cysteine 129-cysteine 139 and cysteine 153-cysteine 173.

The protein belongs to the cystatin family. Prostate.

This Rattus norvegicus (Rat) protein is Cystatin-related protein 2 (Crp2).